The following is a 493-amino-acid chain: Insulinoma-associated protein 2 (493 aa).

The span at 1–12 (MPRGFLVKRTKR) shows a compositional bias: basic residues. An SNAG domain region spans residues 1-20 (MPRGFLVKRTKRSGSSYRAR). The disordered stretch occupies residues 1–77 (MPRGFLVKRT…PGPSPARPAG (77 aa)). A C2H2-type 1; atypical zinc finger spans residues 203–223 (FICQLCKHQYADPFALAQHRC). The C2H2-type 2 zinc finger occupies 231–253 (YRCPECDKVFSCPANLASHRRWH). The segment at 248–310 (SHRRWHKPRP…SGDGQHRDSA (63 aa)) is disordered. Residues 267-276 (PHAPLTPPDP) show a composition bias toward pro residues. Residues 283-294 (ENGRVPRTDDQH) show a composition bias toward basic and acidic residues. 3 C2H2-type zinc fingers span residues 354-376 (FVCP…LGTH), 398-420 (FACP…RLWH), and 452-475 (FSCK…NKCH).

As to expression, expressed in spleen, stomach, liver, kidney and testis. In the pancreas, expressed in islet cells, including insulin-producing beta-cells, but not in acinar cells (at protein level). In the brain, expressed in the neuronal cells of the cerebral cortex, the Purkinje cells of the cerebellum and the hippocampal region including CA1 and CA3 (at protein level).

Its subcellular location is the cytoplasm. The protein resides in the nucleus. In terms of biological role, may function as a growth suppressor or tumor suppressor in liver cells and in certain neurons. The sequence is that of Insulinoma-associated protein 2 (Insm2) from Mus musculus (Mouse).